Reading from the N-terminus, the 290-residue chain is S-adenosylmethionine-dependent nucleotide dehydratase (290 aa).

The Radical SAM core domain occupies 6–226 (SGNNIIPSVN…VNRHSKNKFL (221 aa)). [4Fe-4S] cluster-binding residues include cysteine 22, cysteine 26, and cysteine 29.

This sequence belongs to the radical SAM superfamily. Viperin family. It depends on [4Fe-4S] cluster as a cofactor.

The catalysed reaction is UTP + AH2 + S-adenosyl-L-methionine = 3'-deoxy-3',4'-didehydro-UTP + 5'-deoxyadenosine + L-methionine + A + H2O + H(+). Its function is as follows. Expression of pVip47 in E.coli (strain MG1655) confers resistance to phage P1; has no effect against T7. Catalyzes the conversion of uridine triphosphate (UTP) to 3'-deoxy-3',4'-didehydro-UTP (ddhUTP), probably via a SAM-dependent radical mechanism. The modified nucleotide represses transcription from T7 RNA polymerase-directed genes (possibly by acting as chain terminators), strongly suggesting these nucleotides block viral polymerase transcription. How this protein allows bacteria to resist viruses that do not encode their own RNA polymerase (such as lambda, P1) is unknown. The protein is S-adenosylmethionine-dependent nucleotide dehydratase of Flammeovirga pacifica.